The primary structure comprises 142 residues: Large ribosomal subunit protein uL13 (142 aa).

Belongs to the universal ribosomal protein uL13 family. Part of the 50S ribosomal subunit.

Functionally, this protein is one of the early assembly proteins of the 50S ribosomal subunit, although it is not seen to bind rRNA by itself. It is important during the early stages of 50S assembly. The sequence is that of Large ribosomal subunit protein uL13 from Syntrophobacter fumaroxidans (strain DSM 10017 / MPOB).